We begin with the raw amino-acid sequence, 156 residues long: Small ribosomal subunit protein uS7 (156 aa).

It belongs to the universal ribosomal protein uS7 family. Part of the 30S ribosomal subunit. Contacts proteins S9 and S11.

One of the primary rRNA binding proteins, it binds directly to 16S rRNA where it nucleates assembly of the head domain of the 30S subunit. Is located at the subunit interface close to the decoding center, probably blocks exit of the E-site tRNA. The chain is Small ribosomal subunit protein uS7 from Synechococcus sp. (strain JA-2-3B'a(2-13)) (Cyanobacteria bacterium Yellowstone B-Prime).